Reading from the N-terminus, the 130-residue chain is MIGNWNYGTGRRKSAVARVFIKAGKGDIVVNGKPIADYFSRETSLMIVRQPLELTNHGVTFDIKVNVTGGGETGQAGAVRHGITRALMDYDATLKPELSKAGFVTRDAREVERKKVGFHKARRRKQFSKR.

It belongs to the universal ribosomal protein uS9 family.

The polypeptide is Small ribosomal subunit protein uS9 (Paraburkholderia phytofirmans (strain DSM 17436 / LMG 22146 / PsJN) (Burkholderia phytofirmans)).